A 181-amino-acid chain; its full sequence is Ribosome maturation factor RimM (181 aa).

Residues 98 to 172 (EDEFYFEDLI…RIVIPELSLW (75 aa)) enclose the PRC barrel domain.

Belongs to the RimM family. In terms of assembly, binds ribosomal protein uS19.

The protein localises to the cytoplasm. An accessory protein needed during the final step in the assembly of 30S ribosomal subunit, possibly for assembly of the head region. Essential for efficient processing of 16S rRNA. May be needed both before and after RbfA during the maturation of 16S rRNA. It has affinity for free ribosomal 30S subunits but not for 70S ribosomes. The chain is Ribosome maturation factor RimM from Hyphomonas neptunium (strain ATCC 15444).